The following is a 248-amino-acid chain: Adenosylcobinamide-GDP ribazoletransferase (248 aa).

6 helical membrane passes run 28 to 48, 103 to 123, 126 to 146, 169 to 189, 193 to 213, and 225 to 245; these read LFWF…AGYL, VGSF…IVLV, LAFG…LVQV, AGIQ…LLLM, MLPS…MSLL, and VLGA…VFLA.

This sequence belongs to the CobS family. Mg(2+) is required as a cofactor.

The protein localises to the cell inner membrane. It catalyses the reaction alpha-ribazole + adenosylcob(III)inamide-GDP = adenosylcob(III)alamin + GMP + H(+). It carries out the reaction alpha-ribazole 5'-phosphate + adenosylcob(III)inamide-GDP = adenosylcob(III)alamin 5'-phosphate + GMP + H(+). It participates in cofactor biosynthesis; adenosylcobalamin biosynthesis; adenosylcobalamin from cob(II)yrinate a,c-diamide: step 7/7. In terms of biological role, joins adenosylcobinamide-GDP and alpha-ribazole to generate adenosylcobalamin (Ado-cobalamin). Also synthesizes adenosylcobalamin 5'-phosphate from adenosylcobinamide-GDP and alpha-ribazole 5'-phosphate. The polypeptide is Adenosylcobinamide-GDP ribazoletransferase (Chlorobium phaeobacteroides (strain BS1)).